Here is a 369-residue protein sequence, read N- to C-terminus: DNA replication and repair protein RecF (369 aa).

30–37 (GPNGSGKT) contributes to the ATP binding site.

Belongs to the RecF family.

It is found in the cytoplasm. The RecF protein is involved in DNA metabolism; it is required for DNA replication and normal SOS inducibility. RecF binds preferentially to single-stranded, linear DNA. It also seems to bind ATP. This Chlorobium luteolum (strain DSM 273 / BCRC 81028 / 2530) (Pelodictyon luteolum) protein is DNA replication and repair protein RecF.